The primary structure comprises 115 residues: U3-lycotoxin-Ls1f (115 aa).

A signal peptide spans 1-20; sequence MKFVLLFGVLLVTLFSYSSA. Positions 21–44 are excised as a propeptide; sequence EMLDDFDQADEDELLSLIEKEEAR. Intrachain disulfides connect C48/C63, C55/C72, C62/C87, and C74/C85.

It belongs to the neurotoxin 19 (CSTX) family. 01 subfamily. Expressed by the venom gland.

It is found in the secreted. The polypeptide is U3-lycotoxin-Ls1f (Lycosa singoriensis (Wolf spider)).